The chain runs to 170 residues: MENIVLIGMPLSGKSTLGRELSKILKYDLIDTDTLIEEMEDKSIKEIFKIYGEDYFREKELEIINKFKKESNKVISTGGGLPIYNKNIYELKKIGFTVYLKVPLEELIKRMVKKEYDTRPLLKNNDTKFLEEMYKNRIEIYEKAHTIICNTNYEESLITIVRAYKKWKGI.

Leu11–Thr16 lines the ATP pocket. Ser15 serves as a coordination point for Mg(2+). Residues Asp33, Arg57, and Gly79 each coordinate substrate. Arg119 serves as a coordination point for ATP. Arg137 provides a ligand contact to substrate.

Belongs to the shikimate kinase family. As to quaternary structure, monomer. Mg(2+) serves as cofactor.

The protein localises to the cytoplasm. The catalysed reaction is shikimate + ATP = 3-phosphoshikimate + ADP + H(+). It functions in the pathway metabolic intermediate biosynthesis; chorismate biosynthesis; chorismate from D-erythrose 4-phosphate and phosphoenolpyruvate: step 5/7. Its function is as follows. Catalyzes the specific phosphorylation of the 3-hydroxyl group of shikimic acid using ATP as a cosubstrate. This chain is Shikimate kinase, found in Clostridium botulinum (strain Langeland / NCTC 10281 / Type F).